The primary structure comprises 655 residues: Tetratricopeptide repeat protein 30 homolog (655 aa).

TPR repeat units follow at residues Glu10–Arg43, Ala44–Glu76, Ala143–Asn176, Leu178–Asn210, Leu385–Val418, Ser450–Asp484, and Cys534–Asn567.

It belongs to the TTC30/dfy-1/fleer family.

The protein localises to the cell projection. Its subcellular location is the cilium. Required for polyglutamylation of axonemal tubulin in sensory cilia. Plays a role in anterograde intraflagellar transport (IFT), the process by which cilia precursors are transported from the base of the cilium to the site of their incorporation at the tip. The chain is Tetratricopeptide repeat protein 30 homolog from Drosophila melanogaster (Fruit fly).